Here is a 35-residue protein sequence, read N- to C-terminus: Photosystem II reaction center protein T (35 aa).

The chain crosses the membrane as a helical span at residues 3–23 (ALVYTFLLVSTLGIIFFAIFF).

This sequence belongs to the PsbT family. In terms of assembly, PSII is composed of 1 copy each of membrane proteins PsbA, PsbB, PsbC, PsbD, PsbE, PsbF, PsbH, PsbI, PsbJ, PsbK, PsbL, PsbM, PsbT, PsbY, PsbZ, Psb30/Ycf12, at least 3 peripheral proteins of the oxygen-evolving complex and a large number of cofactors. It forms dimeric complexes.

The protein resides in the plastid. It localises to the chloroplast thylakoid membrane. Found at the monomer-monomer interface of the photosystem II (PS II) dimer, plays a role in assembly and dimerization of PSII. PSII is a light-driven water plastoquinone oxidoreductase, using light energy to abstract electrons from H(2)O, generating a proton gradient subsequently used for ATP formation. This chain is Photosystem II reaction center protein T, found in Saururus cernuus (Lizard's tail).